Reading from the N-terminus, the 117-residue chain is Large ribosomal subunit protein uL18 (117 aa).

Belongs to the universal ribosomal protein uL18 family. In terms of assembly, part of the 50S ribosomal subunit; part of the 5S rRNA/L5/L18/L25 subcomplex. Contacts the 5S and 23S rRNAs.

Functionally, this is one of the proteins that bind and probably mediate the attachment of the 5S RNA into the large ribosomal subunit, where it forms part of the central protuberance. The polypeptide is Large ribosomal subunit protein uL18 (Edwardsiella ictaluri (strain 93-146)).